The chain runs to 120 residues: Small ribosomal subunit protein eS24 (120 aa).

The interval 101 to 120 (RDAGTKQKKGGSKGGQGAKG) is disordered.

The protein belongs to the eukaryotic ribosomal protein eS24 family.

The polypeptide is Small ribosomal subunit protein eS24 (Saccharolobus islandicus (strain M.16.4 / Kamchatka #3) (Sulfolobus islandicus)).